Here is a 313-residue protein sequence, read N- to C-terminus: Inner membrane ABC transporter permease protein YdcU (313 aa).

Residues 1 to 25 (MAMNVLQSPSRPGLGKVSGFFWHNP) are Cytoplasmic-facing. Residues 26 to 46 (GLGLFLLLLGPLMWFGIVYFG) traverse the membrane as a helical segment. The Periplasmic portion of the chain corresponds to 47–92 (SLLTLLWQGFYTFDDFTMSVTPELTLANIRALFNPANYDIILRTLT). In terms of domain architecture, ABC transmembrane type-1 spans 87 to 302 (ILRTLTMAVA…PIILIALYLA (216 aa)). Residues 93-113 (MAVAVTIASAILAFPMAWYMA) form a helical membrane-spanning segment. Residues 114 to 122 (RYTSGKMKA) are Cytoplasmic-facing. The helical transmembrane segment at 123–143 (FFYIAVMLPMWASYIVKAYAW) threads the bilayer. Residues 144 to 154 (TLLLAKDGVAQ) are Periplasmic-facing. A helical transmembrane segment spans residues 155–175 (WFLQHLGLEPLLTAFLTLPAV). At 176–187 (GGNTLSTSGLGR) the chain is on the cytoplasmic side. A helical transmembrane segment spans residues 188 to 208 (FLVFLYIWLPFMILPVQAALE). Topologically, residues 209 to 230 (RLPPSLLQASADLGARPRQTFR) are periplasmic. Residues 231 to 251 (YVVLPLAIPGIAAGSIFTFSL) traverse the membrane as a helical segment. Threonine 252 is a topological domain (cytoplasmic). The helical transmembrane segment at 253 to 273 (LGDFIVPQLVGPPGYFIGNMV) threads the bilayer. Topologically, residues 274–283 (YSQQGAIGNM) are periplasmic. The chain crosses the membrane as a helical span at residues 284 to 304 (PMAAAFTLVPIILIALYLAFV). The Cytoplasmic portion of the chain corresponds to 305–313 (KRLGAFDAL).

This sequence belongs to the binding-protein-dependent transport system permease family. CysTW subfamily.

It localises to the cell inner membrane. Its function is as follows. Probably part of the ABC transporter complex YdcSTUV. Probably responsible for the translocation of the substrate across the membrane. The polypeptide is Inner membrane ABC transporter permease protein YdcU (ydcU) (Escherichia coli (strain K12)).